The sequence spans 476 residues: Methylenetetrahydrofolate--tRNA-(uracil-5-)-methyltransferase TrmFO (476 aa).

Residue 13 to 18 (GGGLAG) participates in FAD binding. A disordered region spans residues 425–446 (PPLESPPTHGADGKKLRGPDKT). A compositionally biased stretch (basic and acidic residues) spans 435-446 (ADGKKLRGPDKT).

Belongs to the MnmG family. TrmFO subfamily. FAD is required as a cofactor.

The protein resides in the cytoplasm. The enzyme catalyses uridine(54) in tRNA + (6R)-5,10-methylene-5,6,7,8-tetrahydrofolate + NADH + H(+) = 5-methyluridine(54) in tRNA + (6S)-5,6,7,8-tetrahydrofolate + NAD(+). The catalysed reaction is uridine(54) in tRNA + (6R)-5,10-methylene-5,6,7,8-tetrahydrofolate + NADPH + H(+) = 5-methyluridine(54) in tRNA + (6S)-5,6,7,8-tetrahydrofolate + NADP(+). Functionally, catalyzes the folate-dependent formation of 5-methyl-uridine at position 54 (M-5-U54) in all tRNAs. This Rhodopseudomonas palustris (strain BisB18) protein is Methylenetetrahydrofolate--tRNA-(uracil-5-)-methyltransferase TrmFO.